We begin with the raw amino-acid sequence, 301 residues long: GTPase Era (301 aa).

An Era-type G domain is found at 4-173 (KAGFVALIGK…LECISQHLSP (170 aa)). Residues 12-19 (GKPNAGKS) form a G1 region. 12–19 (GKPNAGKS) contacts GTP. Residues 38 to 42 (NATRK) form a G2 region. The G3 stretch occupies residues 64-67 (DTPG). Residues 64 to 68 (DTPGL) and 122 to 125 (SKID) contribute to the GTP site. The segment at 122-125 (SKID) is G4. A G5 region spans residues 152–154 (LSA). Positions 204-280 (LSDEIPYESD…FLNLQVIAQK (77 aa)) constitute a KH type-2 domain.

The protein belongs to the TRAFAC class TrmE-Era-EngA-EngB-Septin-like GTPase superfamily. Era GTPase family. In terms of assembly, monomer.

It localises to the cytoplasm. The protein resides in the cell inner membrane. In terms of biological role, an essential GTPase that binds both GDP and GTP, with rapid nucleotide exchange. Plays a role in 16S rRNA processing and 30S ribosomal subunit biogenesis and possibly also in cell cycle regulation and energy metabolism. In Helicobacter pylori (strain ATCC 700392 / 26695) (Campylobacter pylori), this protein is GTPase Era.